The sequence spans 401 residues: Tumor necrosis factor receptor superfamily member 11B (401 aa).

The first 21 residues, 1–21 (MNKWLCCALLVFLDIIEWTTQ), serve as a signal peptide directing secretion. 4 TNFR-Cys repeats span residues 24–62 (FPPK…KTLC), 65–105 (CPDY…NRVC), 107–142 (CEEG…NTVC), and 145–185 (CPDG…DNVC). 8 disulfide bridges follow: C41/C54, C44/C62, C65/C80, C83/C97, C87/C105, C107/C118, C124/C142, and C145/C160. N98 is a glycosylation site (N-linked (GlcNAc...) asparagine). 2 N-linked (GlcNAc...) asparagine glycosylation sites follow: N165 and N178. C166 and C185 form a disulfide bridge. Death domains are found at residues 198-269 (DVTL…MVKK) and 270-365 (IIQD…THSL). N289 carries N-linked (GlcNAc...) asparagine glycosylation.

As to quaternary structure, homodimer. Interacts with TNFSF10 and TNFSF11.

Its subcellular location is the secreted. Its function is as follows. Acts as a decoy receptor for TNFSF11/RANKL and thereby neutralizes its function in osteoclastogenesis. Inhibits the activation of osteoclasts and promotes osteoclast apoptosis in vitro. Bone homeostasis seems to depend on the local ratio between TNFSF11 and TNFRSF11B. May also play a role in preventing arterial calcification. May act as decoy receptor for TNFSF10/TRAIL and protect against apoptosis. TNFSF10/TRAIL binding blocks the inhibition of osteoclastogenesis. The protein is Tumor necrosis factor receptor superfamily member 11B (Tnfrsf11b) of Rattus norvegicus (Rat).